The primary structure comprises 293 residues: Amine sulfotransferase (293 aa).

46-51 (KSGTIW) lines the 3'-phosphoadenylyl sulfate pocket. Catalysis depends on histidine 101, which acts as the Proton acceptor. Residues arginine 123, serine 131, 220–225 (ATFQKM), and 252–254 (RKG) each bind 3'-phosphoadenylyl sulfate.

It belongs to the sulfotransferase 1 family.

The protein resides in the cytoplasm. It catalyses the reaction a primary amine + 3'-phosphoadenylyl sulfate = a sulfamate + adenosine 3',5'-bisphosphate + 2 H(+). Functionally, sulfotransferase that utilizes 3'-phospho-5'-adenylyl sulfate (PAPS) as sulfonate donor to catalyze the N-sulfonation of amines. This chain is Amine sulfotransferase (Sult3a1), found in Mus musculus (Mouse).